The following is a 29-amino-acid chain: Trypsin inhibitor 2 (29 aa).

3 cysteine pairs are disulfide-bonded: cysteine 3-cysteine 20, cysteine 10-cysteine 22, and cysteine 16-cysteine 28.

Belongs to the protease inhibitor I7 (squash-type serine protease inhibitor) family.

It localises to the secreted. In terms of biological role, inhibits trypsin. The chain is Trypsin inhibitor 2 from Bryonia dioica (Red bryony).